Reading from the N-terminus, the 272-residue chain is Insertion element IS600 uncharacterized 31 kDa protein (272 aa).

An Integrase catalytic domain is found at 105–268 (APTAPNQVWV…SPAAFREKYH (164 aa)).

This Shigella sonnei protein is Insertion element IS600 uncharacterized 31 kDa protein.